We begin with the raw amino-acid sequence, 256 residues long: uncharacterized protein (256 aa).

The N-terminal stretch at 1–22 (MNNFRQCALCIGTSVLILLVSG) is a signal peptide. C23 carries the N-palmitoyl cysteine lipid modification. Residue C23 is the site of S-diacylglycerol cysteine attachment.

The protein belongs to the staphylococcal tandem lipoprotein family.

Its subcellular location is the cell membrane. This is an uncharacterized protein from Staphylococcus aureus (strain bovine RF122 / ET3-1).